Reading from the N-terminus, the 353-residue chain is uncharacterized protein (353 aa).

The region spanning 18–83 is the HTH luxR-type domain; the sequence is NIEFPCLLSE…TLWRDVFLRF (66 aa). The segment at residues 42–61 is a DNA-binding region (H-T-H motif); that stretch reads VNEISKRRNRSIKTVSCQKM. Residues 98 to 350 form the EAL domain; sequence NSSVLPVVSS…AFVRKLLASL (253 aa).

This is an uncharacterized protein from Escherichia coli (strain K12).